The sequence spans 300 residues: Dihydroorotate dehydrogenase B (NAD(+)), catalytic subunit (300 aa).

FMN-binding positions include Ser21 and 45 to 46 (KS). Residues Lys45, 69 to 73 (NAVGL), and Asn125 contribute to the substrate site. Position 125 (Asn125) interacts with FMN. Residue Cys128 is the Nucleophile of the active site. Lys163 and Ile187 together coordinate FMN. 188–189 (NT) contributes to the substrate binding site. FMN contacts are provided by residues Gly213, 239–240 (GG), and 261–262 (GT).

This sequence belongs to the dihydroorotate dehydrogenase family. Type 1 subfamily. As to quaternary structure, heterotetramer of 2 PyrK and 2 PyrD type B subunits. FMN is required as a cofactor.

Its subcellular location is the cytoplasm. The enzyme catalyses (S)-dihydroorotate + NAD(+) = orotate + NADH + H(+). The protein operates within pyrimidine metabolism; UMP biosynthesis via de novo pathway; orotate from (S)-dihydroorotate (NAD(+) route): step 1/1. In terms of biological role, catalyzes the conversion of dihydroorotate to orotate with NAD(+) as electron acceptor. In Thermoplasma acidophilum (strain ATCC 25905 / DSM 1728 / JCM 9062 / NBRC 15155 / AMRC-C165), this protein is Dihydroorotate dehydrogenase B (NAD(+)), catalytic subunit (pyrD).